Reading from the N-terminus, the 820-residue chain is Leucine--tRNA ligase (820 aa).

The 'HIGH' region signature appears at proline 42–histidine 52. The short motif at lysine 576–serine 580 is the 'KMSKS' region element. Lysine 579 is an ATP binding site.

This sequence belongs to the class-I aminoacyl-tRNA synthetase family.

It is found in the cytoplasm. The catalysed reaction is tRNA(Leu) + L-leucine + ATP = L-leucyl-tRNA(Leu) + AMP + diphosphate. The sequence is that of Leucine--tRNA ligase from Coxiella burnetii (strain CbuG_Q212) (Coxiella burnetii (strain Q212)).